The following is a 300-amino-acid chain: Geranylgeranyl diphosphate synthase (300 aa).

Isopentenyl diphosphate is bound by residues K50, R53, and H82. Mg(2+) is bound by residues D89 and D95. (2E,6E)-farnesyl diphosphate is bound at residue R100. Position 101 (R101) interacts with isopentenyl diphosphate. Positions 186, 187, and 224 each coordinate (2E,6E)-farnesyl diphosphate.

The protein belongs to the FPP/GGPP synthase family. Mg(2+) is required as a cofactor.

Its subcellular location is the plastid. It is found in the cyanelle. It catalyses the reaction isopentenyl diphosphate + (2E,6E)-farnesyl diphosphate = (2E,6E,10E)-geranylgeranyl diphosphate + diphosphate. The protein operates within isoprenoid biosynthesis; geranylgeranyl diphosphate biosynthesis; geranylgeranyl diphosphate from farnesyl diphosphate and isopentenyl diphosphate: step 1/1. Functionally, catalyzes the condensation of farnesyl diphosphate (FPP) and isopentenyl diphosphate (IPP) to yield geranylgeranyl diphosphate (GGPP) needed for biosynthesis of carotenoids and diterpenes. The protein is Geranylgeranyl diphosphate synthase (crtE) of Cyanophora paradoxa.